We begin with the raw amino-acid sequence, 212 residues long: Octanoyltransferase (212 aa).

One can recognise a BPL/LPL catalytic domain in the interval 34-208 (GQRQDTLILL…AFERQFNARC (175 aa)). Residues 72 to 79 (RGGQVTYH), 139 to 141 (SIG), and 152 to 154 (GLS) contribute to the substrate site. Catalysis depends on cysteine 170, which acts as the Acyl-thioester intermediate.

It belongs to the LipB family.

The protein resides in the cytoplasm. It carries out the reaction octanoyl-[ACP] + L-lysyl-[protein] = N(6)-octanoyl-L-lysyl-[protein] + holo-[ACP] + H(+). The protein operates within protein modification; protein lipoylation via endogenous pathway; protein N(6)-(lipoyl)lysine from octanoyl-[acyl-carrier-protein]: step 1/2. In terms of biological role, catalyzes the transfer of endogenously produced octanoic acid from octanoyl-acyl-carrier-protein onto the lipoyl domains of lipoate-dependent enzymes. Lipoyl-ACP can also act as a substrate although octanoyl-ACP is likely to be the physiological substrate. This Magnetococcus marinus (strain ATCC BAA-1437 / JCM 17883 / MC-1) protein is Octanoyltransferase.